Reading from the N-terminus, the 251-residue chain is 3-deoxy-manno-octulosonate cytidylyltransferase (251 aa).

Belongs to the KdsB family.

It localises to the cytoplasm. It carries out the reaction 3-deoxy-alpha-D-manno-oct-2-ulosonate + CTP = CMP-3-deoxy-beta-D-manno-octulosonate + diphosphate. Its pathway is nucleotide-sugar biosynthesis; CMP-3-deoxy-D-manno-octulosonate biosynthesis; CMP-3-deoxy-D-manno-octulosonate from 3-deoxy-D-manno-octulosonate and CTP: step 1/1. The protein operates within bacterial outer membrane biogenesis; lipopolysaccharide biosynthesis. In terms of biological role, activates KDO (a required 8-carbon sugar) for incorporation into bacterial lipopolysaccharide in Gram-negative bacteria. The chain is 3-deoxy-manno-octulosonate cytidylyltransferase from Agrobacterium fabrum (strain C58 / ATCC 33970) (Agrobacterium tumefaciens (strain C58)).